Reading from the N-terminus, the 316-residue chain is Coiled-coil domain-containing protein 130 homolog (316 aa).

The stretch at 182-203 forms a coiled coil; the sequence is ANSRLRAEFRQQKKEINGQQEL. The disordered stretch occupies residues 287-316; that stretch reads KLEETTSSATNEKPISLVGDYSSSDNDSNG.

This sequence belongs to the CWC16 family.

The sequence is that of Coiled-coil domain-containing protein 130 homolog from Drosophila melanogaster (Fruit fly).